We begin with the raw amino-acid sequence, 218 residues long: uncharacterized protein (218 aa).

This is an uncharacterized protein from Orgyia pseudotsugata multicapsid polyhedrosis virus (OpMNPV).